Reading from the N-terminus, the 442-residue chain is MRYLSFFFEFFFLFSFAFAFDFDVTSDDSINSALTTVTDGMLNYYQSTSHTFTAYWWMTGAGLNSMTDTYAATGNTTHLDMLISALVANKGDNNDYAPNSEKFDLGNDDQGIWGLSAMSAAEVNMTTGDSSASFTELAQAVFNEIMSRWDTSSCGGGVRWQIYSFNNGYSYKNSISNGILFQLAARLARYTNNDTYVDLAQKVWDWSTTVGFVDLDDYTVYDGASVTSNCSSITNEQWSYNVGVYLAGTAFLYNYTNGSSVWQTHMEGLMNKALDYYFTSDKIIYEPSCEPTESCNSDQTAFKGMLARFLGYTMQLAPYTVETILPYIQSSAEAAALACSGGSDGVTCGYMWYWNNGTWDDHYGLGEQISAVETFQALLAQQSATILTLDTGASSESNPDAGTDDGDTVTITPATKSDKGWAGFLTFAFSFVFLLFSIWLYF.

Positions 1–19 (MRYLSFFFEFFFLFSFAFA) are cleaved as a signal peptide. Over 20–421 (FDFDVTSDDS…TPATKSDKGW (402 aa)) the chain is Lumenal. N-linked (GlcNAc...) asparagine glycans are attached at residues N75, N124, N193, N229, N254, N257, and N356. The helical transmembrane segment at 422–442 (AGFLTFAFSFVFLLFSIWLYF) threads the bilayer.

It belongs to the glycosyl hydrolase 76 family.

It is found in the endoplasmic reticulum membrane. It catalyses the reaction Random hydrolysis of (1-&gt;6)-alpha-D-mannosidic linkages in unbranched (1-&gt;6)-mannans.. This is Putative mannan endo-1,6-alpha-mannosidase C1198.07c from Schizosaccharomyces pombe (strain 972 / ATCC 24843) (Fission yeast).